The chain runs to 104 residues: Cytochrome c-551 (104 aa).

The first 22 residues, 1–22, serve as a signal peptide directing secretion; sequence MKKILIPMLALGGALAMQPALA. Residues cysteine 34, cysteine 37, histidine 38, and methionine 83 each contribute to the heme c site.

Binds 1 heme c group covalently per subunit.

It localises to the periplasm. Functionally, electron donor for cytochrome cd1 in nitrite and nitrate respiration. The protein is Cytochrome c-551 (nirM) of Stutzerimonas stutzeri (Pseudomonas stutzeri).